A 548-amino-acid polypeptide reads, in one-letter code: Rhodopsin kinase GRK7 (548 aa).

Ser-34 is subject to Phosphoserine; by PKA. An RGS domain is found at 54–171 (FHSLCEQQPI…LASPFYDRFL (118 aa)). The region spanning 186–449 (FTEFRVLGKG…ADDPRKHPFF (264 aa)) is the Protein kinase domain. Residues 192-200 (LGKGGFGEV) and Lys-215 each bind ATP. The Proton acceptor role is filled by Asp-311. Positions 450–515 (QTVNFPRLEA…GAVPVAWQEE (66 aa)) constitute an AGC-kinase C-terminal domain. Residues 523–548 (EELNDPNRPSGDGKGDSSKSGVCLLL) form a disordered region. Residue Cys-545 is modified to Cysteine methyl ester. The S-geranylgeranyl cysteine moiety is linked to residue Cys-545. The propeptide at 546–548 (LLL) is removed in mature form.

The protein belongs to the protein kinase superfamily. AGC Ser/Thr protein kinase family. GPRK subfamily. As to quaternary structure, interacts (when prenylated) with PDE6D; this promotes release from membranes. In terms of processing, autophosphorylated. Phosphorylation at Ser-34 is regulated by light and activated by cAMP. Retina. Cones and rod.

The protein localises to the membrane. It catalyses the reaction L-threonyl-[rhodopsin] + ATP = O-phospho-L-threonyl-[rhodopsin] + ADP + H(+). The enzyme catalyses L-seryl-[rhodopsin] + ATP = O-phospho-L-seryl-[rhodopsin] + ADP + H(+). Its activity is regulated as follows. Inhibited by phosphorylation of Ser-34. Retina-specific kinase involved in the shutoff of the photoresponse and adaptation to changing light conditions via cone opsin phosphorylation, including rhodopsin (RHO). The chain is Rhodopsin kinase GRK7 (GRK7) from Ictidomys tridecemlineatus (Thirteen-lined ground squirrel).